The sequence spans 99 residues: MSAVTLQQGDLLLNLYIQPKASRDQIVGLHGDELKVAITAPPIDGKANAHLSKYLAKTFKVPKSDIHIMKGELGRHKQIRVIDPKIIPSVITELMGQTS.

This sequence belongs to the UPF0235 family.

The sequence is that of UPF0235 protein Sbal223_1335 from Shewanella baltica (strain OS223).